Reading from the N-terminus, the 186-residue chain is Elongation factor P (186 aa).

The protein belongs to the elongation factor P family.

It is found in the cytoplasm. The protein operates within protein biosynthesis; polypeptide chain elongation. In terms of biological role, involved in peptide bond synthesis. Stimulates efficient translation and peptide-bond synthesis on native or reconstituted 70S ribosomes in vitro. Probably functions indirectly by altering the affinity of the ribosome for aminoacyl-tRNA, thus increasing their reactivity as acceptors for peptidyl transferase. This Prochlorococcus marinus (strain SARG / CCMP1375 / SS120) protein is Elongation factor P.